A 353-amino-acid chain; its full sequence is Phosphate acyltransferase (353 aa).

This sequence belongs to the PlsX family. Homodimer. Probably interacts with PlsY.

The protein localises to the cytoplasm. It carries out the reaction a fatty acyl-[ACP] + phosphate = an acyl phosphate + holo-[ACP]. It participates in lipid metabolism; phospholipid metabolism. Functionally, catalyzes the reversible formation of acyl-phosphate (acyl-PO(4)) from acyl-[acyl-carrier-protein] (acyl-ACP). This enzyme utilizes acyl-ACP as fatty acyl donor, but not acyl-CoA. The polypeptide is Phosphate acyltransferase (Rhodopseudomonas palustris (strain BisB18)).